The sequence spans 201 residues: Small ribosomal subunit protein uS4 (201 aa).

Residues Ala93–Asp153 form the S4 RNA-binding domain.

It belongs to the universal ribosomal protein uS4 family. Part of the 30S ribosomal subunit. Contacts protein S5. The interaction surface between S4 and S5 is involved in control of translational fidelity.

One of the primary rRNA binding proteins, it binds directly to 16S rRNA where it nucleates assembly of the body of the 30S subunit. Its function is as follows. With S5 and S12 plays an important role in translational accuracy. The sequence is that of Small ribosomal subunit protein uS4 from Flavobacterium psychrophilum (strain ATCC 49511 / DSM 21280 / CIP 103535 / JIP02/86).